The following is a 627-amino-acid chain: Neutral endopeptidase (627 aa).

The region spanning 1 to 627 (MTRIQDDLFA…RAPENRLKIW (627 aa)) is the Peptidase M13 domain. H475 is a Zn(2+) binding site. E476 is an active-site residue. Residues H479 and E535 each contribute to the Zn(2+) site. D539 serves as the catalytic Proton donor.

This sequence belongs to the peptidase M13 family. In terms of assembly, monomer. It depends on Zn(2+) as a cofactor.

Its function is as follows. Endopeptidase with broad substrate specificity for several oligopeptides. The polypeptide is Neutral endopeptidase (pepO) (Lactococcus lactis subsp. lactis (strain IL1403) (Streptococcus lactis)).